Consider the following 223-residue polypeptide: 7-cyano-7-deazaguanine synthase (223 aa).

An ATP-binding site is contributed by Met-8–Ala-18. 4 residues coordinate Zn(2+): Cys-187, Cys-195, Cys-198, and Cys-201.

The protein belongs to the QueC family. The cofactor is Zn(2+).

The enzyme catalyses 7-carboxy-7-deazaguanine + NH4(+) + ATP = 7-cyano-7-deazaguanine + ADP + phosphate + H2O + H(+). It participates in purine metabolism; 7-cyano-7-deazaguanine biosynthesis. In terms of biological role, catalyzes the ATP-dependent conversion of 7-carboxy-7-deazaguanine (CDG) to 7-cyano-7-deazaguanine (preQ(0)). The polypeptide is 7-cyano-7-deazaguanine synthase (Campylobacter curvus (strain 525.92)).